Consider the following 376-residue polypeptide: Putative phosphoserine aminotransferase (376 aa).

Arginine 50 contacts L-glutamate. Pyridoxal 5'-phosphate-binding positions include 84–85 (AT), phenylalanine 108, threonine 154, aspartate 176, and glutamine 199. Lysine 200 carries the post-translational modification N6-(pyridoxal phosphate)lysine. A pyridoxal 5'-phosphate-binding site is contributed by 251-252 (NT).

Belongs to the class-V pyridoxal-phosphate-dependent aminotransferase family. SerC subfamily. In terms of assembly, homodimer. Requires pyridoxal 5'-phosphate as cofactor.

It localises to the cytoplasm. The enzyme catalyses O-phospho-L-serine + 2-oxoglutarate = 3-phosphooxypyruvate + L-glutamate. The catalysed reaction is 4-(phosphooxy)-L-threonine + 2-oxoglutarate = (R)-3-hydroxy-2-oxo-4-phosphooxybutanoate + L-glutamate. Its pathway is amino-acid biosynthesis; L-serine biosynthesis; L-serine from 3-phospho-D-glycerate: step 2/3. It participates in cofactor biosynthesis; pyridoxine 5'-phosphate biosynthesis; pyridoxine 5'-phosphate from D-erythrose 4-phosphate: step 3/5. Its function is as follows. Catalyzes the reversible conversion of 3-phosphohydroxypyruvate to phosphoserine and of 3-hydroxy-2-oxo-4-phosphonooxybutanoate to phosphohydroxythreonine. The protein is Putative phosphoserine aminotransferase of Mycobacterium bovis (strain ATCC BAA-935 / AF2122/97).